A 123-amino-acid chain; its full sequence is Putative acidic leucine-rich nuclear phosphoprotein 32 family member C (123 aa).

4 LRR repeats span residues 43 to 64 (ELEF…PKLN), 65 to 87 (KLKK…AEKC), 89 to 110 (NLKH…ELLK), and 114 to 123 (NLKSLDLFNC).

This sequence belongs to the ANP32 family.

In Mus musculus (Mouse), this protein is Putative acidic leucine-rich nuclear phosphoprotein 32 family member C (Anp32c).